Consider the following 804-residue polypeptide: MAPANAPRNGKYAKSSQRTLKRKRVQEDLSSLVQRVEDLDLKESFKAFTDLPLSEPTLSGLSASHYKTLTDIQSRAVSHALKGRDILGAAKTGSGKTLAFLIPVLENLYRKQWAEHDGLGALILSPTRELAIQIFEVLRKVGRYHHFSAGLVIGGKSLKEEQERLGKMNILVCTPGRMLQHLDQTALFDTYNLQMLVLDEADRIMDMGFQKTVDAIIGHLPKERQTMLFSATQTKKVSDLARLSLQDPEYVAVHEAAASATPSTLQQHYVVTPLPQKLDILWSFIRSNLKSKTIVFLSSGKQVRFVYEAFRHLQPGIPLMHLHGRQKQGGRLDITTKYSQAKHAVLFSTDVAARGLDFPAVDWVIQLDCPEDADTYIHRVGRTARYERDGRAVLFLDPSEEQGMLKRLEQKKVPVEKINVKANKQQSIKNQLQNMCFKDPELKYLGQKAFISYVKSVYVQKDKEIFKLKDLDLEEFASSLGLPGAPRIKFIKGDDTKERKNAPRAVAHLSSDDDESDAEDDEKKSKKKDAPQVRTKYDRMFERRNQDVLAGHYTKLINDDGTLADPKATDEADEDNDFLSVKRRFDAGDKQLEVGGSSDESGSDSEAETGKKDVKVVNIDGKEPLVIDSKRREKLLKSKKKLLKFKGKGTKLIYDDEGNAHEIYEMEDEEQFRAKGDAKEQQARFLAAEAERTRLADVEDKELVKQKRREKKEKRKARERELLAQEEQEEMLVQLPPPEDDDQGRFSPSEDEAPRPSKKQRVQFAEPAESEEERRPKKPKKSTAEPKEIQTLEDLESLATGLLG.

The interval 1-24 is disordered; sequence MAPANAPRNGKYAKSSQRTLKRKR. The Q motif motif lies at 46–74; it reads KAFTDLPLSEPTLSGLSASHYKTLTDIQS. The 175-residue stretch at 77 to 251 folds into the Helicase ATP-binding domain; sequence VSHALKGRDI…RLSLQDPEYV (175 aa). 90–97 serves as a coordination point for ATP; the sequence is AKTGSGKT. Residues 199–202 carry the DEAD box motif; that stretch reads DEAD. One can recognise a Helicase C-terminal domain in the interval 277–436; that stretch reads KLDILWSFIR…SIKNQLQNMC (160 aa). 3 disordered regions span residues 493 to 541, 589 to 615, and 695 to 804; these read GDDT…DRMF, DKQL…KDVK, and LADV…GLLG. Positions 521-541 are enriched in basic and acidic residues; sequence DEKKSKKKDAPQVRTKYDRMF. The span at 695-705 shows a compositional bias: basic and acidic residues; the sequence is LADVEDKELVK. The segment covering 706–715 has biased composition (basic residues); the sequence is QKRREKKEKR.

This sequence belongs to the DEAD box helicase family. DDX10/DBP4 subfamily. Interacts with the U3 and U14 snoRNAs. Associates with pre-ribosomal complexes.

Its subcellular location is the nucleus. It is found in the nucleolus. The enzyme catalyses ATP + H2O = ADP + phosphate + H(+). Its function is as follows. ATP-dependent RNA helicase required for ribosome biogenesis. Involved in the release of U14 snoRNA in pre-ribosomal complexes. Required for pre-rRNA cleavage at site A2. This chain is ATP-dependent RNA helicase dbp4 (dbp4), found in Aspergillus terreus (strain NIH 2624 / FGSC A1156).